We begin with the raw amino-acid sequence, 409 residues long: Aquaporin-10 (409 aa).

Disordered stretches follow at residues 1 to 24 and 47 to 74; these read MADAPTYIRQSTTGTATTAPTTMP and ADVNDDNHDNYDETTGLRSGEKKTRPLV. Residues 12 to 22 are compositionally biased toward low complexity; sequence TTGTATTAPTT. 2 helical membrane passes run 110-130 and 138-158; these read FLGSFILIVFGNGVVAQVVLS and LSINIGYGLAVAFGVYIAGGI. Positions 164-166 match the NPA 1 motif; that stretch reads NPA. A helical membrane pass occupies residues 184-204; that stretch reads VYMFAQYAGCICASAIVHAIY. N215 carries an N-linked (GlcNAc...) asparagine glycan. The next 2 helical transmembrane spans lie at 241–261 and 270–290; these read TGLADQIFATSFLMIGILALT and GGVVPILVGCLVMAIGLAYGF. Residues 297–299 carry the NPA 2 motif; the sequence is NPA. Residues 339 to 359 form a helical membrane-spanning segment; the sequence is IPVVGPHLGALLGAAIYFFFI.

It belongs to the MIP/aquaporin (TC 1.A.8) family.

It is found in the cell membrane. In terms of biological role, aquaglyceroporin that may modulate the water content and osmolytes during anhydrobiosis. The polypeptide is Aquaporin-10 (Milnesium tardigradum (Water bear)).